A 104-amino-acid polypeptide reads, in one-letter code: MFAVIRTGGKQYRVVPDAVLKVEKLEAEAGSTVTFTDVLAIGGEQGVTLGKPVVEGATVTATVIAQDKLDTVIIFKKRRRQNSRRKNGHRQPVTVLRVSGINAA.

Belongs to the bacterial ribosomal protein bL21 family. Part of the 50S ribosomal subunit. Contacts protein L20.

Functionally, this protein binds to 23S rRNA in the presence of protein L20. This is Large ribosomal subunit protein bL21 from Acidiphilium cryptum (strain JF-5).